Consider the following 153-residue polypeptide: Ribosome maturation factor RimP (153 aa).

Belongs to the RimP family.

The protein localises to the cytoplasm. In terms of biological role, required for maturation of 30S ribosomal subunits. This chain is Ribosome maturation factor RimP, found in Glaesserella parasuis serovar 5 (strain SH0165) (Haemophilus parasuis).